We begin with the raw amino-acid sequence, 336 residues long: Fructose-1,6-bisphosphatase class 1 (336 aa).

Residues E90, D112, L114, and D115 each coordinate Mg(2+). Substrate contacts are provided by residues 115 to 118 (DGSS), N207, and K273. E279 contacts Mg(2+).

Belongs to the FBPase class 1 family. As to quaternary structure, homotetramer. The cofactor is Mg(2+).

It localises to the cytoplasm. It catalyses the reaction beta-D-fructose 1,6-bisphosphate + H2O = beta-D-fructose 6-phosphate + phosphate. The protein operates within carbohydrate biosynthesis; gluconeogenesis. The polypeptide is Fructose-1,6-bisphosphatase class 1 (Xanthomonas axonopodis pv. citri (strain 306)).